The following is a 229-amino-acid chain: Large ribosomal subunit protein uL1 (229 aa).

This sequence belongs to the universal ribosomal protein uL1 family. As to quaternary structure, part of the 50S ribosomal subunit.

In terms of biological role, binds directly to 23S rRNA. The L1 stalk is quite mobile in the ribosome, and is involved in E site tRNA release. Functionally, protein L1 is also a translational repressor protein, it controls the translation of the L11 operon by binding to its mRNA. This Haemophilus influenzae (strain 86-028NP) protein is Large ribosomal subunit protein uL1.